The chain runs to 162 residues: Shikimate kinase (162 aa).

10–15 (GAGKST) provides a ligand contact to ATP. Serine 14 provides a ligand contact to Mg(2+). Positions 28, 52, and 73 each coordinate substrate. Arginine 113 serves as a coordination point for ATP. Arginine 129 contributes to the substrate binding site.

The protein belongs to the shikimate kinase family. Monomer. Mg(2+) serves as cofactor.

The protein localises to the cytoplasm. The enzyme catalyses shikimate + ATP = 3-phosphoshikimate + ADP + H(+). Its pathway is metabolic intermediate biosynthesis; chorismate biosynthesis; chorismate from D-erythrose 4-phosphate and phosphoenolpyruvate: step 5/7. Functionally, catalyzes the specific phosphorylation of the 3-hydroxyl group of shikimic acid using ATP as a cosubstrate. This is Shikimate kinase from Lactococcus lactis subsp. lactis (strain IL1403) (Streptococcus lactis).